Consider the following 256-residue polypeptide: NAD(P)H-hydrate epimerase (256 aa).

Residues 1 to 18 (MADPRRDPAAESKDRPST) are compositionally biased toward basic and acidic residues. Positions 1–21 (MADPRRDPAAESKDRPSTERV) are disordered. Residues 23-229 (AYTADAVRAA…DLGLEPYLRR (207 aa)) form the YjeF N-terminal domain. A (6S)-NADPHX-binding site is contributed by 74-78 (DNGGD). Residues Asn75 and Asp135 each contribute to the K(+) site. (6S)-NADPHX is bound by residues 139–147 (GIGRLADRR) and Asp172. Ser175 serves as a coordination point for K(+).

This sequence belongs to the NnrE/AIBP family. K(+) serves as cofactor.

It carries out the reaction (6R)-NADHX = (6S)-NADHX. The enzyme catalyses (6R)-NADPHX = (6S)-NADPHX. Functionally, catalyzes the epimerization of the S- and R-forms of NAD(P)HX, a damaged form of NAD(P)H that is a result of enzymatic or heat-dependent hydration. This is a prerequisite for the S-specific NAD(P)H-hydrate dehydratase to allow the repair of both epimers of NAD(P)HX. This Microbacterium testaceum (strain StLB037) protein is NAD(P)H-hydrate epimerase.